We begin with the raw amino-acid sequence, 381 residues long: Chaperone protein DnaJ (381 aa).

Positions 5–70 (DYYEVLGLQK…QKRAAYDQYG (66 aa)) constitute a J domain. A CR-type zinc finger spans residues 133-211 (GTTKDIQINT…CHGEGRVHKK (79 aa)). Zn(2+) is bound by residues cysteine 146, cysteine 149, cysteine 163, cysteine 166, cysteine 185, cysteine 188, cysteine 199, and cysteine 202. 4 CXXCXGXG motif repeats span residues 146 to 153 (CDSCGGSG), 163 to 170 (CPHCHGSG), 185 to 192 (CPTCHGSG), and 199 to 206 (CRSCHGEG).

The protein belongs to the DnaJ family. Homodimer. Zn(2+) is required as a cofactor.

It localises to the cytoplasm. In terms of biological role, participates actively in the response to hyperosmotic and heat shock by preventing the aggregation of stress-denatured proteins and by disaggregating proteins, also in an autonomous, DnaK-independent fashion. Unfolded proteins bind initially to DnaJ; upon interaction with the DnaJ-bound protein, DnaK hydrolyzes its bound ATP, resulting in the formation of a stable complex. GrpE releases ADP from DnaK; ATP binding to DnaK triggers the release of the substrate protein, thus completing the reaction cycle. Several rounds of ATP-dependent interactions between DnaJ, DnaK and GrpE are required for fully efficient folding. Also involved, together with DnaK and GrpE, in the DNA replication of plasmids through activation of initiation proteins. This is Chaperone protein DnaJ from Haemophilus influenzae (strain 86-028NP).